The sequence spans 556 residues: Polypeptide N-acetylgalactosaminyltransferase 13 (556 aa).

The Cytoplasmic portion of the chain corresponds to methionine 1–phenylalanine 4. A helical; Signal-anchor for type II membrane protein membrane pass occupies residues valine 5–tyrosine 27. The Lumenal segment spans residues phenylalanine 28–threonine 556. 2 N-linked (GlcNAc...) asparagine glycosylation sites follow: asparagine 94 and asparagine 116. 5 cysteine pairs are disulfide-bonded: cysteine 105–cysteine 338, cysteine 329–cysteine 407, cysteine 441–cysteine 458, cysteine 481–cysteine 496, and cysteine 522–cysteine 539. The catalytic subdomain A stretch occupies residues leucine 114–arginine 224. Residues aspartate 155 and arginine 185 each coordinate substrate. Mn(2+)-binding residues include aspartate 208 and histidine 210. The segment at proline 284–arginine 346 is catalytic subdomain B. Tryptophan 315 contacts substrate. A Mn(2+)-binding site is contributed by histidine 343. Residues arginine 346 and tyrosine 351 each coordinate substrate. In terms of domain architecture, Ricin B-type lectin spans tyrosine 428–arginine 550. N-linked (GlcNAc...) asparagine glycosylation occurs at asparagine 551.

This sequence belongs to the glycosyltransferase 2 family. GalNAc-T subfamily. Mn(2+) serves as cofactor. In terms of tissue distribution, specifically expressed in neuronal cells. Not expressed in glial cells such as astrocytes. Expressed at low level.

Its subcellular location is the golgi apparatus membrane. It carries out the reaction L-seryl-[protein] + UDP-N-acetyl-alpha-D-galactosamine = a 3-O-[N-acetyl-alpha-D-galactosaminyl]-L-seryl-[protein] + UDP + H(+). The catalysed reaction is L-threonyl-[protein] + UDP-N-acetyl-alpha-D-galactosamine = a 3-O-[N-acetyl-alpha-D-galactosaminyl]-L-threonyl-[protein] + UDP + H(+). It functions in the pathway protein modification; protein glycosylation. Its function is as follows. Catalyzes the initial reaction in O-linked oligosaccharide biosynthesis, the transfer of an N-acetyl-D-galactosamine (GalNAc) residue from UDP-GalNAc to a serine or threonine residue on the protein receptor. Generates GalNAc-O-Ser/Thr structure also known as Tn antigen, which itself is immunogenic but also serves as a precursor for the synthesis of different mucin-type O-glycan core structures. Contributes to the synthesis of O-linked glycans on mucins and proteoglycans of the central nervous system. Can glycosylate both unmodified peptides and glycopeptides that already contain an O-linked GalNAc sugar. Transfers GalNAc to Thr-/Ser-rich tandem repeats GTTPSPVPTTSTTSAP of MUC5AC. Transfers GalNAc to three consecutive serine/threonine residues on SDC3 forming a triplet-Tn epitope expressed in Purkinje cells of the developing brain. May promote neurogenesis through glycosylation and stabilization of PDPN. This is Polypeptide N-acetylgalactosaminyltransferase 13 (Galnt13) from Mus musculus (Mouse).